Reading from the N-terminus, the 776-residue chain is Probable inorganic carbon transporter subunit DabA (776 aa).

Zn(2+)-binding residues include Cys313, Asp315, His473, and Cys488.

This sequence belongs to the inorganic carbon transporter (TC 9.A.2) DabA family. In terms of assembly, forms a complex with DabB. Requires Zn(2+) as cofactor.

The protein localises to the cell inner membrane. Its function is as follows. Part of an energy-coupled inorganic carbon pump. The sequence is that of Probable inorganic carbon transporter subunit DabA from Chromobacterium violaceum (strain ATCC 12472 / DSM 30191 / JCM 1249 / CCUG 213 / NBRC 12614 / NCIMB 9131 / NCTC 9757 / MK).